Here is a 367-residue protein sequence, read N- to C-terminus: Cyclin-D5-1 (367 aa).

Residues Gln307–Thr333 are disordered.

The protein belongs to the cyclin family. Cyclin D subfamily.

This is Cyclin-D5-1 (CYCD5-1) from Oryza sativa subsp. japonica (Rice).